The chain runs to 354 residues: Deubiquitination-protection protein dph1 (354 aa).

The region spanning 1–78 is the Ubiquitin-like domain; the sequence is MTNISLTIKA…SIHLVKTLGQ (78 aa). A UBA domain is found at 309–353; that stretch reads PPEERYAEQLSQLNEMGFVDFERNVQALRRSGGNVQGAIESLLSD.

Protects ubiquitin chains against dissambly by deubiquitinating enzymes thereby promoting protein degradation. The polypeptide is Deubiquitination-protection protein dph1 (dph1) (Schizosaccharomyces pombe (strain 972 / ATCC 24843) (Fission yeast)).